We begin with the raw amino-acid sequence, 743 residues long: MRPGLPPYLTVFTVYLLSHLPSQRYGADAASEALDPHAFHLLLNTYGRPIRFLRENTTQCTYNSSLRNSTVVRENAISFNFFQSYNQYYVFHMPRCLFAGPLAEQFLNQVDLTETLERYQQRLNTYALVSKDLASYRSFSQQLKAQDSLGQQPTTVPPPIDLSIPHVWMPPQTTPHDWKGSHTTSGLHRPHFNQTCILFDGHDLLFSTVTPCLHQGFYLMDELRYVKITLTEDFFVVTVSIDDDTPMLLIFGHLPRVLFKAPYQRDNFILRQTEKHELLVLVKKAQLNRHSYLKDSDFLDAALDFNYLDLSALLRNSFHRYAVDVLKSGRCQMLDRRTVEMAFAYALALFAAARQEEAGTEISIPRALDRQAALLQIQEFMITCLSQTPPRTTLLLYPTAVDLAKRALWTPDQITDITSLVRLVYILSKQNQQHLIPQWALRQIADFALQLHKTHLASFLSAFARQELYLMGSLVHSMLVHTTERREIFIVETGLCSLAELSHFTQLLAHPHHEYLSDLYTPCSSSGRRDHSLERLTRLFPDATVPATVPAALSILSTMQPSTLETFPDLFCLPLGESFSALTVSEHVSYVVTNQYLIKGISYPVSTTVVGQSLIITQTDSQTKCELTRNMHTTHSITAALNISLENCAFCQSALLEYDDTQGVINIMYMHDSDDVLFALDPYNEVVVSSPRTHYLMLLKNGTVLEVTDVVVDATDSRLLMMSVYALSAIIGIYLLYRMLKTC.

The first 23 residues, 1 to 23 (MRPGLPPYLTVFTVYLLSHLPSQ), serve as a signal peptide directing secretion. At 24–720 (RYGADAASEA…VVDATDSRLL (697 aa)) the chain is on the virion surface side. N56, N63, N68, and N193 each carry an N-linked (GlcNAc...) asparagine; by host glycan. The segment at 218–281 (YLMDELRYVK…QTEKHELLVL (64 aa)) is interaction with gL. N-linked (GlcNAc...) asparagine; by host glycans are attached at residues N642 and N701. A helical transmembrane segment spans residues 721–741 (MMSVYALSAIIGIYLLYRMLK). The Intravirion segment spans residues 742-743 (TC).

Belongs to the herpesviridae glycoprotein H family. In terms of assembly, interacts with glycoprotein L (gL); this interaction is necessary for the correct processing and cell surface expression of gH. The heterodimer gH/gL seems to interact with gB trimers during fusion. Forms the envelope pentamer complex (PC) composed of gH, gL, UL128, UL130, and UL131A. The pentamer interacts with host NRP2. Forms the envelope trimer complex composed of gH, gL, and gO. The trimer interacts with host PDGFRA. The trimer also interacts with host EPHA2. Interacts with UL116. In terms of processing, N-glycosylated, O-glycosylated, and sialylated.

The protein localises to the virion membrane. It is found in the host cell membrane. The protein resides in the host endosome membrane. In terms of biological role, the heterodimer glycoprotein H-glycoprotein L is required for the fusion of viral and plasma membranes leading to virus entry into the host cell. Following initial binding to host receptor, membrane fusion is mediated by the fusion machinery composed of gB and the heterodimer gH/gL. May also be involved in the fusion between the virion envelope and the outer nuclear membrane during virion morphogenesis. In human cytomegalovirus, forms two distincts complexes to mediate viral entry, a trimer and a pentamer at the surface of the virion envelope. The gH-gL-gO trimer is required for infection in fibroblasts by interacting with host PDGFRA, and in glioblastoma cells by interacting with host EPHA2. The gH-gL-UL128-UL130-UL131A pentamer is essential for viral entry in epithelial, endothelial and myeloid cells via interaction with host NRP2. This Human cytomegalovirus (strain AD169) (HHV-5) protein is Envelope glycoprotein H.